The chain runs to 365 residues: Probable tRNA pseudouridine synthase B (365 aa).

Catalysis depends on Asp43, which acts as the Nucleophile. In terms of domain architecture, PUA spans 209-285 (YPKIVVKRSA…DHIFLEADDG (77 aa)). A disordered region spans residues 300–365 (SGSGLHKDIQ…GKERHGRDHQ (66 aa)). Composition is skewed to basic and acidic residues over residues 304-318 (LHKD…KDTR), 326-336 (TGPEKTADRVW), and 354-365 (GGGKERHGRDHQ).

Belongs to the pseudouridine synthase TruB family. Type 2 subfamily.

It catalyses the reaction uridine(55) in tRNA = pseudouridine(55) in tRNA. Could be responsible for synthesis of pseudouridine from uracil-55 in the psi GC loop of transfer RNAs. The chain is Probable tRNA pseudouridine synthase B from Thermoplasma acidophilum (strain ATCC 25905 / DSM 1728 / JCM 9062 / NBRC 15155 / AMRC-C165).